Consider the following 78-residue polypeptide: RNA-binding protein KhpA (78 aa).

Positions 29 to 78 (TIIYELTVAKGDIGKIIGKEGRTIKAIRTLLVSVASRDNVKVSLEIMEER) constitute a KH domain.

It belongs to the KhpA RNA-binding protein family.

The protein localises to the cytoplasm. A probable RNA-binding protein. The chain is RNA-binding protein KhpA from Chlamydia trachomatis serovar D (strain ATCC VR-885 / DSM 19411 / UW-3/Cx).